Here is a 704-residue protein sequence, read N- to C-terminus: MLRGRSLSVTSLGGLPAWEAERLPVEDLLLFEVSWEVTNKVGGICTVIQSKAKTTANEWGENYFLIGPYFEHNVKTQVEPCEPANDAVRKAVDAMNKHGCQVHFGRWLIEGSPYVVLFDISSSVWNLDRWKGDFWEACGVGIPHDDREANDMLIFGSLTAWFLKEVTDHADGKHVIAQFHEWQAGTGLILSRARKLPIATIFTTHATLLGRYLCAANIDFYNQLDKFNIDKEAGERQIYHRYCMERASVHCAHVFTTVSEITAIEADHMLKRKPDVVTPNGLNVKKFSAVHEFQNLHATYKARIQDFVRGHFYGHLDFDLEKTLFLFIAGRYEFSNKGADIFLESLSRLNFLLRMHKSNVTVVVFFIMPAKTNNFNVETLKGQAVRKQLWDTVHCMKEKFGKKLYDGLLRGEIPDMNSILDRDDLTIMKRAIFSTQRHSLPPVTTHNMIDDSTDPILSTIRRIGLFNNRTDRVKVILHPEFLSSTSPLLPMDYEEFVRGCHLGVFPSYYEPWGYTPAECTVMGIPSVTTNLSGFGCFMQEHVADPTAYGIYIVDRRFRSPDDSCNQLTQFLYGFCKQSRRQRIIQRNRTERLSDLLDWRYLGRYYQHARHLTLSRAFPDKFHLEPTSPPTTDGFKYPRPSSVPPSPSGSQTSSPQSSDVENEGDEDERYDEEEEAERDRLNIKSPFSLNHIPKGKKKLHGEYKN.

S8 and S11 each carry phosphoserine. K40 contributes to the UDP binding site. The UDP-alpha-D-glucose site is built by H205 and R211. The alpha-D-glucose 6-phosphate site is built by H291, E292, Q294, H297, and K301. R331 contributes to the UDP binding site. Residue R331 participates in UDP-alpha-D-glucose binding. H501 contacts alpha-D-glucose 6-phosphate. UDP-alpha-D-glucose contacts are provided by E510, W512, and G513. T515 contacts UDP. Alpha-D-glucose 6-phosphate contacts are provided by R582 and R586. Positions 620-704 are disordered; it reads KFHLEPTSPP…KKKLHGEYKN (85 aa). S627 bears the Phosphoserine mark. Residues S641, S645, S649, and S653 each carry the phosphoserine; by GSK3-alpha and GSK3-beta modification. The segment covering 647-657 has biased composition (low complexity); that stretch reads SGSQTSSPQSS. S657 carries the post-translational modification Phosphoserine; by CK2. A compositionally biased stretch (acidic residues) spans 659 to 675; sequence VENEGDEDERYDEEEEA. S684 bears the Phosphoserine mark.

This sequence belongs to the glycosyltransferase 3 family. As to quaternary structure, part of the glycogen synthase (GS)-glycogenin complex, a heterooctamer composed of a tetramer of GS and 2 dimers of glycogenin, where each GS protomer binds to one glycogenin subunit (via glycogenin C-terminus); the GS tetramer may dissociate from glycogenin dimers to continue glycogen polymerization on its own. May also form a heterooctamer complex with GYG1 (via GYG1 C-terminus). In terms of processing, primed phosphorylation at Ser-657 (site 5) by CSNK2A1 and CSNK2A2 is required for inhibitory phosphorylation at Ser-641 (site 3a), Ser-645 (site 3b), Ser-649 (site 3c) and Ser-653 (site 4) by GSK3A an GSK3B. Dephosphorylation at Ser-641 and Ser-645 by PP1 activates the enzyme. Phosphorylation at Ser-8 is not required for interaction with GYG1. Interaction with GYG1 does not regulate the phosphorylation at Ser-8 and Ser-641. In terms of tissue distribution, specifically expressed in liver (at protein level).

It carries out the reaction [(1-&gt;4)-alpha-D-glucosyl](n) + UDP-alpha-D-glucose = [(1-&gt;4)-alpha-D-glucosyl](n+1) + UDP + H(+). It participates in glycan biosynthesis; glycogen biosynthesis. Allosteric activation by glucose-6-phosphate. Phosphorylation reduces the activity towards UDP-glucose. When in the non-phosphorylated state, glycogen synthase does not require glucose-6-phosphate as an allosteric activator; when phosphorylated it does. Glycogen synthase participates in the glycogen biosynthetic process along with glycogenin and glycogen branching enzyme. Extends the primer composed of a few glucose units formed by glycogenin by adding new glucose units to it. In this context, glycogen synthase transfers the glycosyl residue from UDP-Glc to the non-reducing end of alpha-1,4-glucan. This is Glycogen [starch] synthase, liver from Rattus norvegicus (Rat).